Reading from the N-terminus, the 240-residue chain is MSVLFISDLHLEAERPDITRAFLSFLDERARRAEALYILGDFFEAWIGDDGMDAFQRSIAQSLRQVADGGTRIYLMHGNRDFLIGKAFCREAGCTLLPDPSVIDLYGEPVLLMHGDSLCTRDEAYMRLRRWLRNPLTLWVLRHLPLATRHKLARKLRKESRAQTRMKAVDIIDVTPEEVPRVMRGHGVRTLIHGHTHRPAEHPLDIDGQPARRIVLGDWDRQGWALEIDANGHRQAPFPL.

Positions 8, 10, 41, 79, and 114 each coordinate Mn(2+). 79–80 (NR) is a substrate binding site. Substrate contacts are provided by Asp122, Ser160, Thr164, Lys167, and His195. His195 and His197 together coordinate Mn(2+).

The protein belongs to the LpxH family. Mn(2+) serves as cofactor.

It is found in the cell inner membrane. It catalyses the reaction UDP-2-N,3-O-bis[(3R)-3-hydroxytetradecanoyl]-alpha-D-glucosamine + H2O = 2-N,3-O-bis[(3R)-3-hydroxytetradecanoyl]-alpha-D-glucosaminyl 1-phosphate + UMP + 2 H(+). It participates in glycolipid biosynthesis; lipid IV(A) biosynthesis; lipid IV(A) from (3R)-3-hydroxytetradecanoyl-[acyl-carrier-protein] and UDP-N-acetyl-alpha-D-glucosamine: step 4/6. In terms of biological role, hydrolyzes the pyrophosphate bond of UDP-2,3-diacylglucosamine to yield 2,3-diacylglucosamine 1-phosphate (lipid X) and UMP by catalyzing the attack of water at the alpha-P atom. Involved in the biosynthesis of lipid A, a phosphorylated glycolipid that anchors the lipopolysaccharide to the outer membrane of the cell. The chain is UDP-2,3-diacylglucosamine hydrolase from Pseudomonas aeruginosa (strain UCBPP-PA14).